Here is a 345-residue protein sequence, read N- to C-terminus: Lysine-specific demethylase JMJ32 (345 aa).

A JmjC domain is found at 122–315; that stretch reads GYLQQQNDCF…IKYAYFNFLQ (194 aa). Positions 174, 176, and 281 each coordinate Fe cation.

Belongs to the JARID1 histone demethylase family. Fe(2+) serves as cofactor. Expressed ubiquitously including in vasculatures, leaves, siliques, roots and inflorescences. Present in the root meristem. Accumulates in cotyledons and root tips of young seedlings.

It is found in the nucleus. The protein resides in the cytoplasm. Its subcellular location is the endoplasmic reticulum. It carries out the reaction N(6),N(6),N(6)-trimethyl-L-lysyl(27)-[histone H3] + 2-oxoglutarate + O2 = N(6),N(6)-dimethyl-L-lysyl(27)-[histone H3] + formaldehyde + succinate + CO2. The enzyme catalyses N(6),N(6)-dimethyl-L-lysyl(27)-[histone H3] + 2-oxoglutarate + O2 = N(6)-methyl-L-lysyl(27)-[histone H3] + formaldehyde + succinate + CO2. The catalysed reaction is N(6),N(6),N(6)-trimethyl-L-lysyl(27)-[histone H3] + 2 2-oxoglutarate + 2 O2 = N(6)-methyl-L-lysyl(27)-[histone H3] + 2 formaldehyde + 2 succinate + 2 CO2. Its function is as follows. Histone demethylase that demethylates 'Lys-27' (H3K27me) of histone H3 with a specific activity for H3K27me3 and H3K27me2, and involved in the regulation of gene expression. No activity on H3K27me1. Together with JMJ30, regulates the flowering-repressor FLOWERING LOCUS C (FLC) locus by removing the repressive histone modification H3 lysine 27 trimethylation (H3K27me3), especially at elevated temperatures (e.g. 29 degrees Celsius), thus preventing extreme precocious flowering. JMJ30 and JMJ32 are regulators involved in the integration of abscisic acid (ABA) and brassinosteroids (BR) signaling pathways. Together with JMJ30, controls ABA-mediated growth arrest during the post-germination stage in unfavorable conditions, and responses to ABA during root development, via the removal of repressive histone mark (H3K27me3) from the SnRK2.8 promoter, thus promoting SnRK2.8 expression and subsequent kinase-dependent ABI3 activation. In addition, removes the repressive histone marks (H3K27me3) from the BZR1 locus in response to stress and ABA, thus activating the BR signaling pathway which, in turn, inhibits the ABA signaling pathway. The chain is Lysine-specific demethylase JMJ32 from Arabidopsis thaliana (Mouse-ear cress).